Reading from the N-terminus, the 182-residue chain is NADH-quinone oxidoreductase subunit B 2 (182 aa).

Positions 47, 48, 113, and 142 each coordinate [4Fe-4S] cluster.

This sequence belongs to the complex I 20 kDa subunit family. As to quaternary structure, NDH-1 is composed of 14 different subunits. Subunits NuoB, C, D, E, F, and G constitute the peripheral sector of the complex. [4Fe-4S] cluster serves as cofactor.

The protein localises to the cell inner membrane. It carries out the reaction a quinone + NADH + 5 H(+)(in) = a quinol + NAD(+) + 4 H(+)(out). Its function is as follows. NDH-1 shuttles electrons from NADH, via FMN and iron-sulfur (Fe-S) centers, to quinones in the respiratory chain. The immediate electron acceptor for the enzyme in this species is believed to be ubiquinone. Couples the redox reaction to proton translocation (for every two electrons transferred, four hydrogen ions are translocated across the cytoplasmic membrane), and thus conserves the redox energy in a proton gradient. The sequence is that of NADH-quinone oxidoreductase subunit B 2 from Anaeromyxobacter sp. (strain K).